A 217-amino-acid chain; its full sequence is ATP phosphoribosyltransferase (217 aa).

This sequence belongs to the ATP phosphoribosyltransferase family. Short subfamily. In terms of assembly, heteromultimer composed of HisG and HisZ subunits.

Its subcellular location is the cytoplasm. It carries out the reaction 1-(5-phospho-beta-D-ribosyl)-ATP + diphosphate = 5-phospho-alpha-D-ribose 1-diphosphate + ATP. It functions in the pathway amino-acid biosynthesis; L-histidine biosynthesis; L-histidine from 5-phospho-alpha-D-ribose 1-diphosphate: step 1/9. Functionally, catalyzes the condensation of ATP and 5-phosphoribose 1-diphosphate to form N'-(5'-phosphoribosyl)-ATP (PR-ATP). Has a crucial role in the pathway because the rate of histidine biosynthesis seems to be controlled primarily by regulation of HisG enzymatic activity. This Burkholderia multivorans (strain ATCC 17616 / 249) protein is ATP phosphoribosyltransferase.